The chain runs to 511 residues: uncharacterized protein (511 aa).

Positions 2 to 254 (LMDYEKERTE…NFQEKAPIHE (253 aa)) constitute a CoA carboxyltransferase N-terminal domain. The tract at residues 2-506 (LMDYEKERTE…KEMTFTNRKH (505 aa)) is carboxyltransferase. A CoA carboxyltransferase C-terminal domain is found at 260-506 (HFETPLADVI…KEMTFTNRKH (247 aa)).

Belongs to the AccD/PCCB family.

This is an uncharacterized protein from Bacillus subtilis (strain 168).